Reading from the N-terminus, the 459-residue chain is tRNA modification GTPase MnmE (459 aa).

Residues R29, E86, and K125 each contribute to the (6S)-5-formyl-5,6,7,8-tetrahydrofolate site. Residues 221–382 form the TrmE-type G domain; the sequence is GMNVVIAGRP…LTEHLKAVMG (162 aa). N231 serves as a coordination point for K(+). GTP-binding positions include 231–236, 250–256, and 275–278; these read NAGKSS, TNIEGTT, and DTAG. Position 235 (S235) interacts with Mg(2+). 3 residues coordinate K(+): T250, I252, and T255. T256 contributes to the Mg(2+) binding site. (6S)-5-formyl-5,6,7,8-tetrahydrofolate is bound at residue K459.

It belongs to the TRAFAC class TrmE-Era-EngA-EngB-Septin-like GTPase superfamily. TrmE GTPase family. In terms of assembly, homodimer. Heterotetramer of two MnmE and two MnmG subunits. K(+) is required as a cofactor.

The protein resides in the cytoplasm. Exhibits a very high intrinsic GTPase hydrolysis rate. Involved in the addition of a carboxymethylaminomethyl (cmnm) group at the wobble position (U34) of certain tRNAs, forming tRNA-cmnm(5)s(2)U34. This chain is tRNA modification GTPase MnmE, found in Marinomonas sp. (strain MWYL1).